A 1588-amino-acid polypeptide reads, in one-letter code: Pentafunctional AROM polypeptide (1588 aa).

Residues 1–392 are 3-dehydroquinate synthase; the sequence is MVQLAKVPIL…YGDSAQFVSD (392 aa). NAD(+)-binding positions include 43–45, 78–81, 109–111, and D114; these read DTN, ETSK, and GGV. R125 contacts 7-phospho-2-dehydro-3-deoxy-D-arabino-heptonate. NAD(+) is bound at residue 134–135; that stretch reads TS. 7-phospho-2-dehydro-3-deoxy-D-arabino-heptonate is bound by residues D141 and K147. An NAD(+)-binding site is contributed by K156. N157 contributes to the 7-phospho-2-dehydro-3-deoxy-D-arabino-heptonate binding site. NAD(+) contacts are provided by residues 174 to 177 and N185; that span reads WLET. E189 serves as a coordination point for Zn(2+). 7-phospho-2-dehydro-3-deoxy-D-arabino-heptonate is bound by residues 189–192 and K258; that span reads EVIK. E268 (proton acceptor; for 3-dehydroquinate synthase activity) is an active-site residue. 7-phospho-2-dehydro-3-deoxy-D-arabino-heptonate is bound by residues 272–276 and H279; that span reads RNLLN. H279 is a binding site for Zn(2+). H283 functions as the Proton acceptor; for 3-dehydroquinate synthase activity in the catalytic mechanism. Positions 295 and 364 each coordinate 7-phospho-2-dehydro-3-deoxy-D-arabino-heptonate. H295 serves as a coordination point for Zn(2+). An EPSP synthase region spans residues 405-871; that stretch reads VYPFKDIPAD…WDVLHSELGA (467 aa). C853 acts as the For EPSP synthase activity in catalysis. Residues 890–1080 form a shikimate kinase region; it reads SVVIIGMRAA…IPSGRSAFVC (191 aa). 895–902 provides a ligand contact to ATP; the sequence is GMRAAGKT. A 3-dehydroquinase region spans residues 1081–1293; it reads LTFDDLTEQT…AAPGQLTVAQ (213 aa). The active-site Proton acceptor; for 3-dehydroquinate dehydratase activity is the H1198. The active-site Schiff-base intermediate with substrate; for 3-dehydroquinate dehydratase activity is the K1227. The tract at residues 1306-1588 is shikimate dehydrogenase; it reads PKELFVVGKP…KAIFDAVTKE (283 aa).

The protein in the N-terminal section; belongs to the sugar phosphate cyclases superfamily. Dehydroquinate synthase family. It in the 2nd section; belongs to the EPSP synthase family. In the 3rd section; belongs to the shikimate kinase family. This sequence in the 4th section; belongs to the type-I 3-dehydroquinase family. The protein in the C-terminal section; belongs to the shikimate dehydrogenase family. Homodimer. Zn(2+) serves as cofactor.

It localises to the cytoplasm. The catalysed reaction is 7-phospho-2-dehydro-3-deoxy-D-arabino-heptonate = 3-dehydroquinate + phosphate. The enzyme catalyses 3-dehydroquinate = 3-dehydroshikimate + H2O. It carries out the reaction shikimate + NADP(+) = 3-dehydroshikimate + NADPH + H(+). It catalyses the reaction shikimate + ATP = 3-phosphoshikimate + ADP + H(+). The catalysed reaction is 3-phosphoshikimate + phosphoenolpyruvate = 5-O-(1-carboxyvinyl)-3-phosphoshikimate + phosphate. It participates in metabolic intermediate biosynthesis; chorismate biosynthesis; chorismate from D-erythrose 4-phosphate and phosphoenolpyruvate: step 2/7. The protein operates within metabolic intermediate biosynthesis; chorismate biosynthesis; chorismate from D-erythrose 4-phosphate and phosphoenolpyruvate: step 3/7. Its pathway is metabolic intermediate biosynthesis; chorismate biosynthesis; chorismate from D-erythrose 4-phosphate and phosphoenolpyruvate: step 4/7. It functions in the pathway metabolic intermediate biosynthesis; chorismate biosynthesis; chorismate from D-erythrose 4-phosphate and phosphoenolpyruvate: step 5/7. It participates in metabolic intermediate biosynthesis; chorismate biosynthesis; chorismate from D-erythrose 4-phosphate and phosphoenolpyruvate: step 6/7. Functionally, the AROM polypeptide catalyzes 5 consecutive enzymatic reactions in prechorismate polyaromatic amino acid biosynthesis. This chain is Pentafunctional AROM polypeptide, found in Saccharomyces cerevisiae (strain Lalvin EC1118 / Prise de mousse) (Baker's yeast).